The chain runs to 70 residues: Probable ferredoxin TA0517 (70 aa).

4Fe-4S ferredoxin-type domains lie at 8 to 36 (TEMD…WLDE) and 37 to 66 (TVIK…AEWF). [4Fe-4S] cluster-binding residues include Cys-17, Cys-20, Cys-23, Cys-27, Cys-46, Cys-49, Cys-52, and Cys-56.

[4Fe-4S] cluster is required as a cofactor.

Its function is as follows. Ferredoxins are iron-sulfur proteins that transfer electrons in a wide variety of metabolic reactions. The protein is Probable ferredoxin TA0517 of Thermoplasma acidophilum (strain ATCC 25905 / DSM 1728 / JCM 9062 / NBRC 15155 / AMRC-C165).